The chain runs to 173 residues: Crossover junction endodeoxyribonuclease RuvC (173 aa).

Active-site residues include aspartate 8, glutamate 69, and aspartate 141. Aspartate 8, glutamate 69, and aspartate 141 together coordinate Mg(2+).

Belongs to the RuvC family. As to quaternary structure, homodimer which binds Holliday junction (HJ) DNA. The HJ becomes 2-fold symmetrical on binding to RuvC with unstacked arms; it has a different conformation from HJ DNA in complex with RuvA. In the full resolvosome a probable DNA-RuvA(4)-RuvB(12)-RuvC(2) complex forms which resolves the HJ. Mg(2+) is required as a cofactor.

The protein localises to the cytoplasm. The enzyme catalyses Endonucleolytic cleavage at a junction such as a reciprocal single-stranded crossover between two homologous DNA duplexes (Holliday junction).. Functionally, the RuvA-RuvB-RuvC complex processes Holliday junction (HJ) DNA during genetic recombination and DNA repair. Endonuclease that resolves HJ intermediates. Cleaves cruciform DNA by making single-stranded nicks across the HJ at symmetrical positions within the homologous arms, yielding a 5'-phosphate and a 3'-hydroxyl group; requires a central core of homology in the junction. The consensus cleavage sequence is 5'-(A/T)TT(C/G)-3'. Cleavage occurs on the 3'-side of the TT dinucleotide at the point of strand exchange. HJ branch migration catalyzed by RuvA-RuvB allows RuvC to scan DNA until it finds its consensus sequence, where it cleaves and resolves the cruciform DNA. This is Crossover junction endodeoxyribonuclease RuvC from Stenotrophomonas maltophilia (strain K279a).